The primary structure comprises 295 residues: Thioredoxin-related transmembrane protein 2 (295 aa).

A signal peptide spans 1-48; the sequence is MAVLAPLIALVYSVPRLSRWLARPYCLLSALLSIAFLLVRKLPPICNG. Topologically, residues 49-102 are extracellular; sequence LPTQREDGNPCDFDWREVEILMFLSAIVMMKNRRSITVEQHVGNIFMFSKVANA. Residues 103–125 traverse the membrane as a helical segment; sequence ILFFRLDIRMGLLYLTLCIVFLM. The Thioredoxin domain maps to 114 to 269; the sequence is LLYLTLCIVF…LYQRAKKHSK (156 aa). Residues 126–295 lie on the Cytoplasmic side of the membrane; it reads TCKPPLYMGP…VPDGENKKDK (170 aa). Residues serine 211 and serine 243 each carry the phosphoserine modification. Residues 266 to 295 are disordered; the sequence is KHSKGGDMSEEKPVDPAPTTVPDGENKKDK. Over residues 269–279 the composition is skewed to basic and acidic residues; that stretch reads KGGDMSEEKPV. The Di-lysine motif signature appears at 292–295; it reads KKDK.

In terms of assembly, monomer. Homodimer; disulfide-linked. Occurs in both reduced and oxidized monomeric form. Oxidative conditions increase homodimerization. Interacts with CANX. Interacts with ATP2A2.

The protein resides in the endoplasmic reticulum membrane. The protein localises to the mitochondrion membrane. Endoplasmic reticulum and mitochondria-associated protein that probably functions as a regulator of cellular redox state and thereby regulates protein post-translational modification, protein folding and mitochondrial activity. Indirectly regulates neuronal proliferation, migration, and organization in the developing brain. This Mus musculus (Mouse) protein is Thioredoxin-related transmembrane protein 2 (Tmx2).